We begin with the raw amino-acid sequence, 369 residues long: 2-aminoethylphosphonate--pyruvate transaminase (369 aa).

Lysine 193 is subject to N6-(pyridoxal phosphate)lysine.

It belongs to the class-V pyridoxal-phosphate-dependent aminotransferase family. PhnW subfamily. Homodimer. The cofactor is pyridoxal 5'-phosphate.

It carries out the reaction (2-aminoethyl)phosphonate + pyruvate = phosphonoacetaldehyde + L-alanine. Involved in phosphonate degradation. The chain is 2-aminoethylphosphonate--pyruvate transaminase from Burkholderia mallei (strain NCTC 10247).